A 108-amino-acid polypeptide reads, in one-letter code: Hydrogenase expression/formation protein HupN (108 aa).

The tract at residues 88 to 108 (REPQLPPHLQAQLPPKEPNSP) is disordered.

Belongs to the HupF/HypC family.

In Azotobacter chroococcum mcd 1, this protein is Hydrogenase expression/formation protein HupN (hupN).